Consider the following 235-residue polypeptide: Proteasome subunit alpha type-2-B (235 aa).

Residue lysine 64 forms a Glycyl lysine isopeptide (Lys-Gly) (interchain with G-Cter in ubiquitin) linkage.

Belongs to the peptidase T1A family. As to quaternary structure, component of the 20S core complex of the 26S proteasome. The 26S proteasome is composed of a core protease (CP), known as the 20S proteasome, capped at one or both ends by the 19S regulatory particle (RP/PA700). The 20S proteasome core is composed of 28 subunits that are arranged in four stacked rings, resulting in a barrel-shaped structure. The two end rings are each formed by seven alpha subunits, and the two central rings are each formed by seven beta subunits. The catalytic chamber with the active sites is on the inside of the barrel.

It is found in the cytoplasm. Its subcellular location is the nucleus. The proteasome is a multicatalytic proteinase complex which is characterized by its ability to cleave peptides with Arg, Phe, Tyr, Leu, and Glu adjacent to the leaving group at neutral or slightly basic pH. The proteasome has an ATP-dependent proteolytic activity. The chain is Proteasome subunit alpha type-2-B (PAB2) from Arabidopsis thaliana (Mouse-ear cress).